The following is a 243-amino-acid chain: Isoprenyl transferase 2 (243 aa).

Asp-23 is a catalytic residue. Residue Asp-23 participates in Mg(2+) binding. Substrate contacts are provided by residues 24-27 (GNGR), Trp-28, Arg-36, His-40, and 68-70 (STE). Catalysis depends on Asn-71, which acts as the Proton acceptor. Residues Trp-72, Arg-74, Arg-191, and 197-199 (RTS) contribute to the substrate site. Glu-210 serves as a coordination point for Mg(2+).

The protein belongs to the UPP synthase family. In terms of assembly, homodimer. The cofactor is Mg(2+).

Its function is as follows. Catalyzes the condensation of isopentenyl diphosphate (IPP) with allylic pyrophosphates generating different type of terpenoids. In Corynebacterium glutamicum (strain ATCC 13032 / DSM 20300 / JCM 1318 / BCRC 11384 / CCUG 27702 / LMG 3730 / NBRC 12168 / NCIMB 10025 / NRRL B-2784 / 534), this protein is Isoprenyl transferase 2.